Here is a 513-residue protein sequence, read N- to C-terminus: Na(+)/H(+) antiporter NhaB (513 aa).

The next 12 helical transmembrane spans lie at 23-43, 52-72, 97-117, 120-140, 144-164, 202-222, 238-258, 303-323, 348-368, 391-411, 447-467, and 475-495; these read LALI…PFVA, IFTL…LLAI, LLLM…LFIF, LLLS…AAAF, FLDA…FYGI, LMMH…VGEP, FFLR…LTCL, AIIG…VGLI, TESL…AVII, LFYI…VGTI, ATPN…APLI, and VWMA…CVEF.

This sequence belongs to the NhaB Na(+)/H(+) (TC 2.A.34) antiporter family.

It is found in the cell inner membrane. It carries out the reaction 2 Na(+)(in) + 3 H(+)(out) = 2 Na(+)(out) + 3 H(+)(in). Its function is as follows. Na(+)/H(+) antiporter that extrudes sodium in exchange for external protons. The chain is Na(+)/H(+) antiporter NhaB from Escherichia coli O6:K15:H31 (strain 536 / UPEC).